The primary structure comprises 337 residues: MKLAVIPGDGIGVEVTAEALKVLGKLVPDLETTEYDLGARRYNATGELLPADELDQIRQHDAILLGAIGDPRIVAPGILERGLLLNMRFQLDHHVNLRPAQLYPGALSPLAAQPEIDFVVVREGTEGPYTGNGGAIRVGTDHEIATEVSINTWFGAERVVRYAFALAQTRSKHLTLIHKTNVLSNAGAIWTRAIETVGAEYPDVETAYCHIDAATIYMVTDPSRFDVIVTDNLFGDIITDLAGAVTGGIGLAASGNIDASGTNPSMFEPVHGSAPDIAGKGIADPTAAILSAALLLRHLGREDDAARVEAVVAADLATRGEGPISTTEIGDRITAAL.

Substrate-binding residues include arginine 88, arginine 98, arginine 122, and aspartate 212. Mg(2+) is bound by residues aspartate 212, aspartate 236, and aspartate 240. Residue 272 to 284 (GSAPDIAGKGIAD) participates in NAD(+) binding.

This sequence belongs to the isocitrate and isopropylmalate dehydrogenases family. LeuB type 2 subfamily. As to quaternary structure, homodimer. Mg(2+) serves as cofactor. The cofactor is Mn(2+).

The protein localises to the cytoplasm. The catalysed reaction is (2R,3S)-3-isopropylmalate + NAD(+) = 4-methyl-2-oxopentanoate + CO2 + NADH. It functions in the pathway amino-acid biosynthesis; L-leucine biosynthesis; L-leucine from 3-methyl-2-oxobutanoate: step 3/4. Functionally, catalyzes the oxidation of 3-carboxy-2-hydroxy-4-methylpentanoate (3-isopropylmalate) to 3-carboxy-4-methyl-2-oxopentanoate. The product decarboxylates to 4-methyl-2 oxopentanoate. The chain is 3-isopropylmalate dehydrogenase from Rhodococcus erythropolis (strain PR4 / NBRC 100887).